Consider the following 327-residue polypeptide: DNA-directed RNA polymerase subunit alpha (327 aa).

The tract at residues 1–233 (MVREKVKVST…NLFIPFLHVE (233 aa)) is alpha N-terminal domain (alpha-NTD). An alpha C-terminal domain (alpha-CTD) region spans residues 264–327 (TKELAFQYIF…KKILDILEKK (64 aa)).

The protein belongs to the RNA polymerase alpha chain family. In terms of assembly, in plastids the minimal PEP RNA polymerase catalytic core is composed of four subunits: alpha, beta, beta', and beta''. When a (nuclear-encoded) sigma factor is associated with the core the holoenzyme is formed, which can initiate transcription.

It is found in the plastid. It localises to the chloroplast. The enzyme catalyses RNA(n) + a ribonucleoside 5'-triphosphate = RNA(n+1) + diphosphate. Its function is as follows. DNA-dependent RNA polymerase catalyzes the transcription of DNA into RNA using the four ribonucleoside triphosphates as substrates. This is DNA-directed RNA polymerase subunit alpha from Capsella bursa-pastoris (Shepherd's purse).